The following is a 242-amino-acid chain: Ribosomal RNA small subunit methyltransferase G (242 aa).

S-adenosyl-L-methionine is bound by residues Gly-82, Phe-87, 133–134 (AE), and Arg-152.

It belongs to the methyltransferase superfamily. RNA methyltransferase RsmG family.

The protein localises to the cytoplasm. Specifically methylates the N7 position of a guanine in 16S rRNA. In Acetivibrio thermocellus (strain ATCC 27405 / DSM 1237 / JCM 9322 / NBRC 103400 / NCIMB 10682 / NRRL B-4536 / VPI 7372) (Clostridium thermocellum), this protein is Ribosomal RNA small subunit methyltransferase G.